The primary structure comprises 350 residues: Bifunctional methylenetetrahydrofolate dehydrogenase/cyclohydrolase, mitochondrial (350 aa).

The N-terminal 35 residues, 1–35, are a transit peptide targeting the mitochondrion; that stretch reads MAAASFITSLVTRLLRSAQSGRLHQRPFHLSAVRN. Lys50 is modified (N6-acetyllysine; alternate). A Glycyl lysine isopeptide (Lys-Gly) (interchain with G-Cter in SUMO2); alternate cross-link involves residue Lys50. Substrate is bound by residues 84-88 and 131-133; these read YVLNK and VQL. NAD(+)-binding positions include 200–202 and Arg233; that span reads GRS. 309–313 contacts substrate; it reads PGGVG.

The protein belongs to the tetrahydrofolate dehydrogenase/cyclohydrolase family. In terms of assembly, homodimer. The cofactor is Mg(2+).

It is found in the mitochondrion. It catalyses the reaction (6R)-5,10-methylene-5,6,7,8-tetrahydrofolate + NAD(+) = (6R)-5,10-methenyltetrahydrofolate + NADH. The enzyme catalyses (6R)-5,10-methenyltetrahydrofolate + H2O = (6R)-10-formyltetrahydrofolate + H(+). Its function is as follows. Although its dehydrogenase activity is NAD-specific, it can also utilize NADP at a reduced efficiency. This is Bifunctional methylenetetrahydrofolate dehydrogenase/cyclohydrolase, mitochondrial (MTHFD2) from Bos taurus (Bovine).